The sequence spans 1207 residues: MIDVNNFHYMKIGLASPEKIRSWSFGEVKKPETINYRTLKPEKDGLFCERIFGPTKDWECSCGKYKRVRYKGMVCDRCGVEVTKSKVRRERMGHIELAAPVSHIWYFKGIPSRMGLLLDMSPRALEEVIYFASYVVVNPGPTGLEKKTLLSEAEFREYYDKFPGKFTAKMGAEGIKELLEEIDLDAELKHLRDELESATGQRLTRAIKRLEVVESFRHSGNNPAWMILDVLPIIPPEIRPMVQLDGGRFATSDLNDLYRRVINRNNRLKRLLDLGAPGIIVQNEKRMLQEAVDALIDNGRRGRPVTGPGNRPLKSLSHMLKGKQGRFRQNLLGKRVDYSGRSVIAVGPSLKMYQCGLPKEMALELFKPFIMKELVQREIATNIKNAKSKIERMDDEVWDVLEDVIKEHPVLLNRAPTLHRLGIQAFEPTLVEGRAIRLHPLATTAYNADFDGDQMAVHVPLSKEAQAEARMLMLAAQNILNPKDGKPVVTPSQDMVLGNYYLTLERKEAVNTGTIYNDTNEVLKAYANGYVHLHTRIGVHAASFNNPTFTEEQNKKILLTSVGKVIFNEIIPDSFAYINEPTQTNLENKTPEKYFIAPTEIGEEGLKAYFDEQPLIKPFNKNFLGNVIAEVFNRFSITDTSMMLDRMKDLGFKFSSKAGITVGVSDIVVLPDKQDILDEHEKLVEKVTKQFNRGLITDFERYNAVIEIWTDAKDQIQNELMGSLEKTNPIFMMSDSGARGNASNFTQLAGMRGLMAAPSGEIIELPITSSFREGLTVLEYFISTHGARKGLADTALKTADSGYLTRRLVDVAQDVIVREEDCGTDRGLLVSDIKEGTEMIEPFIERIEGRYSKETIRHPETNEVIVNPDELVTAEIAKKITDAGIEEMYIRSAFTCNTRHGVCEKCYGKNLATGEKVEVGEAVGTIAAQSIGEPGTQLTMRTFHTGGVAGSDITQGLPRIQEIFEARNPKGQAVITEIEGVVDDIKLAKDRQQEIVIKGANETKSYLASGTSRLKVEVGQSVERGEVLTEGSIEPKNYLSVSGLNATESYLLKEVQKVYRMQGVEIDDKHVEVMVRQMLRKVRIIEAGDTKLLPGSLVDIHNFTDANREAFKERKRPATAKPVLLGITKASLETESFLSAASFQETTRVLTDAAIKGKRDNLLGLKENVIIGKLIPAGTGMRRYRDVEYDKAAPETEIVEEVQTTEI.

Residues C60, C62, C75, and C78 each coordinate Zn(2+). 3 residues coordinate Mg(2+): D449, D451, and D453. The Zn(2+) site is built by C822, C896, C903, and C906.

The protein belongs to the RNA polymerase beta' chain family. In terms of assembly, the RNAP catalytic core consists of 2 alpha, 1 beta, 1 beta' and 1 omega subunit. When a sigma factor is associated with the core the holoenzyme is formed, which can initiate transcription. The cofactor is Mg(2+). Zn(2+) is required as a cofactor.

It carries out the reaction RNA(n) + a ribonucleoside 5'-triphosphate = RNA(n+1) + diphosphate. In terms of biological role, DNA-dependent RNA polymerase catalyzes the transcription of DNA into RNA using the four ribonucleoside triphosphates as substrates. In Staphylococcus saprophyticus subsp. saprophyticus (strain ATCC 15305 / DSM 20229 / NCIMB 8711 / NCTC 7292 / S-41), this protein is DNA-directed RNA polymerase subunit beta'.